A 228-amino-acid polypeptide reads, in one-letter code: Probable septum site-determining protein MinC (228 aa).

Belongs to the MinC family. In terms of assembly, interacts with MinD and FtsZ.

Its function is as follows. Cell division inhibitor that blocks the formation of polar Z ring septums. Rapidly oscillates between the poles of the cell to destabilize FtsZ filaments that have formed before they mature into polar Z rings. Prevents FtsZ polymerization. The chain is Probable septum site-determining protein MinC from Bacillus mycoides (strain KBAB4) (Bacillus weihenstephanensis).